The primary structure comprises 606 residues: MTADAHLFSASDLEAATRIAEPDFELLDALIRTDDPDDQAHTLARVALSAFDNYYAVSRRIPALAKAAFYARDWPATVRLSKIRIGLYTACIDQLVPLLKAGLPELANDEQVWVRAEAELLAAIAGRYEADFAFAFWQSLRRKLVSDEWRPVSYDTGPAARPPAAIAAVVRTIAATLPIQPEVIRNVLDAAGFTGPWRDLDGDAALAAAAIEAALEPLSPRAGETAKIEIAESGFFRNRGACLVGRIRLRDRGDMPPRNIPLLVALLNEDDGLVVDAVLCDSDELQFAFSSTLANYHATNPRYHELARLLHELMPKRPLGTQYSCIGFHHLGKVAVMNEILTEHRRSKEKLATAPGFKGTVAIAFTMPCSAYVLKIIRDHPTDDYKFDYFDGLDAVLRKYNLVHEIDRAGSMLDNIIYSNVKLARTMFAPDLLDELLEAGIGTVTLERDALVFRHLIVQIKLTPLPLYLTTAAAADARAAVINLGDCIKNNAAADIFNKDLDGRNYGVSRIRKVYLFDYDAVEQLTEVKVRSTPPMPRAEDEDGVVFRPAQMLEGLRIDDPGLRRAFRDAHPELMQPDYWEGMQHALRAGKVPKVMNYPTSRRLRR.

Residues 354 to 360 (APGFKGT) and K375 contribute to the ATP site. The active site involves D414.

The protein belongs to the AceK family.

It localises to the cytoplasm. It carries out the reaction L-seryl-[isocitrate dehydrogenase] + ATP = O-phospho-L-seryl-[isocitrate dehydrogenase] + ADP + H(+). In terms of biological role, bifunctional enzyme which can phosphorylate or dephosphorylate isocitrate dehydrogenase (IDH) on a specific serine residue. This is a regulatory mechanism which enables bacteria to bypass the Krebs cycle via the glyoxylate shunt in response to the source of carbon. When bacteria are grown on glucose, IDH is fully active and unphosphorylated, but when grown on acetate or ethanol, the activity of IDH declines drastically concomitant with its phosphorylation. The polypeptide is Isocitrate dehydrogenase kinase/phosphatase (Rhodopseudomonas palustris (strain BisB5)).